The sequence spans 860 residues: Leucine--tRNA ligase (860 aa).

Residues 42 to 52 carry the 'HIGH' region motif; that stretch reads PYPSGRLHMGH. Positions 619 to 623 match the 'KMSKS' region motif; that stretch reads KMSKS. Lysine 622 contributes to the ATP binding site.

The protein belongs to the class-I aminoacyl-tRNA synthetase family.

Its subcellular location is the cytoplasm. The enzyme catalyses tRNA(Leu) + L-leucine + ATP = L-leucyl-tRNA(Leu) + AMP + diphosphate. The protein is Leucine--tRNA ligase of Yersinia pseudotuberculosis serotype I (strain IP32953).